Reading from the N-terminus, the 842-residue chain is Transient receptor potential cation channel subfamily V member 1 (842 aa).

Residues 1 to 64 (MKRWVSLDSG…DSEETSPMDC (64 aa)) are disordered. Residues 1-435 (MKRWVSLDSG…QDKWDRVVKR (435 aa)) are Cytoplasmic-facing. Acidic residues predominate over residues 10–21 (GESEDPLPEDTC). Residues 113–141 (KLYDRRRIFEAVAQNNCQELESLLCFLQR) form an ANK 1 repeat. Arg-118 serves as a coordination point for ATP. Residue Thr-147 is modified to Phosphothreonine; by PKA; in vitro. Residues 156-188 (TGKTCLLKAMLNLHSGQNDTIPLLLEIARQTDS) form an ANK 2 repeat. ATP contacts are provided by residues Lys-158, Lys-163, Asn-167, 202-205 (YKGQ), and 213-214 (ER). ANK repeat units follow at residues 206–231 (TALH…ADVQ), 252–279 (ELPL…QPAD), 288–324 (NTVL…KLHP), and 338–361 (TPLA…REIL). Position 373 is a phosphothreonine; by PKA; in vitro (Thr-373). An ANK 7 repeat occupies 396–418 (NSVLEVIAYSSSETPNRHDMLLV). A helical membrane pass occupies residues 436–457 (IFYFNFFVYCLYMIIFTTAAYY). At 458–475 (RPVDGLPPYKLRNLPGDY) the chain is on the extracellular side. A helical membrane pass occupies residues 476–500 (FRVTGEILSVAGGVYFFFRGIQYFL). The Cytoplasmic segment spans residues 501-513 (QRRPSMKALFVDS). Phosphoserine; by PKC/PRKCE is present on Ser-505. Resiniferatoxin is bound at residue 514–515 (YS). The chain crosses the membrane as a helical span at residues 514–535 (YSEMLFFVQALFMLATVVLYFS). At 536-538 (HCK) the chain is on the extracellular side. Residues 539-559 (EYVATMVFSLALGWINMLYYT) form a helical membrane-spanning segment. Arg-560 serves as a coordination point for resiniferatoxin. Topologically, residues 560–562 (RGF) are cytoplasmic. Residues 563-601 (QQMGIYAVMIEKMILRDLCRFMFVYLVFLFGFSTAVVTL) form a helical membrane-spanning segment. Topologically, residues 602 to 633 (IEDGKNSSTSAESTSHRWRGFGCRSSDSSYNS) are extracellular. N-linked (GlcNAc...) asparagine glycosylation occurs at Asn-607. The segment at residues 634 to 655 (LYSTCLELFKFTIGMGDLEFTE) is an intramembrane region (pore-forming). Gly-647 serves as a coordination point for Na(+). The Selectivity filter signature appears at 647–650 (GMGD). A Ca(2+)-binding site is contributed by Asp-650. The Extracellular portion of the chain corresponds to 656–659 (NYDF). Residues 660–686 (KAVFIILLLAYVILTYILLLNMLIALM) form a helical membrane-spanning segment. Over 687–842 (GETVNKIAQE…FKDSVAAAEK (156 aa)) the chain is Cytoplasmic. The segment at 688–716 (ETVNKIAQESKSIWKLQRAITILDTEKGF) is AD. Thr-708 is modified (phosphothreonine). Positions 771 to 805 (EGVKRTLSFSLRSGRVSGRNWKNFALVPLLRDAST) are interaction with calmodulin. Phosphoserine is present on Ser-778. Residues 781–796 (LRSGRVSGRNWKNFAL) are required for PIP2-mediated channel inhibition. A Phosphoserine; by PKC/PRKCE and PKC/PRKCZ modification is found at Ser-804. Ser-824 carries the phosphoserine modification.

It belongs to the transient receptor (TC 1.A.4) family. TrpV subfamily. TRPV1 sub-subfamily. Homotetramer. Interacts with PIRT. May also form a heteromeric channel with TRPV3. Interacts with CALM, PRKCM and CSK. Interacts with PRKCG and NTRK1, probably by forming a trimeric complex. Interacts with the Scolopendra mutilans RhTx toxin. Interacts with TMEM100. Interacts with PACS2. Phosphorylation by PKA reverses capsaicin-induced dephosphorylation at multiple sites. Phosphorylation by CAMKII seems to regulate binding to vanilloids. Phosphorylated and modulated by PRKCE, PRKCM and probably PRKCZ. Dephosphorylation by calcineurin seems to lead to receptor desensitization and phosphorylation by CAMKII recovers activity.

It is found in the postsynaptic cell membrane. The protein localises to the cell projection. It localises to the dendritic spine membrane. Its subcellular location is the cell membrane. The catalysed reaction is Ca(2+)(in) = Ca(2+)(out). It catalyses the reaction Mg(2+)(in) = Mg(2+)(out). The enzyme catalyses Na(+)(in) = Na(+)(out). It carries out the reaction K(+)(in) = K(+)(out). The channel is sensitized by ATP binding. Repeated stimulation with capsaicin gives rise to progressively smaller responses, due to desensitization. This desensitization is triggered by the influx of calcium ions and is inhibited by elevated ATP levels. Ca(2+) and CALM displace ATP from its binding site and trigger a conformation change that leads to a closed, desensitized channel. The double-knot toxin (DkTx) from the Chinese earth tiger tarantula activates the channel and traps it in an open conformation. The Scolopendra mutilans RhTx toxin potentiates the heat activation pathway mediated by this channel by binding to the charge-rich outer pore region (in an activated state). Channel activity is activated via the interaction with PIRT and phosphatidylinositol 4,5-bisphosphate (PIP2). Both PIRT and PIP2 are required to activate channel activity. Intracellular PIP2 inhibits desensitization. Its function is as follows. Non-selective calcium permeant cation channel involved in detection of noxious chemical and thermal stimuli. Seems to mediate proton influx and may be involved in intracellular acidosis in nociceptive neurons. Involved in mediation of inflammatory pain and hyperalgesia. Sensitized by a phosphatidylinositol second messenger system activated by receptor tyrosine kinases, which involves PKC isozymes and PCL. Activation by vanilloids, like capsaicin, and temperatures higher than 42 degrees Celsius. Upon activation, exhibits a time- and Ca(2+)-dependent outward rectification, followed by a long-lasting refractory state. Mild extracellular acidic pH (6.5) potentiates channel activation by noxious heat and vanilloids, whereas acidic conditions (pH &lt;6) directly activate the channel. Can be activated by endogenous compounds, including 12-hydroperoxytetraenoic acid and bradykinin. Acts as ionotropic endocannabinoid receptor with central neuromodulatory effects. Triggers a form of long-term depression (TRPV1-LTD) mediated by the endocannabinoid anandamine in the hippocampus and nucleus accumbens by affecting AMPA receptors endocytosis. This Oryctolagus cuniculus (Rabbit) protein is Transient receptor potential cation channel subfamily V member 1 (Trpv1).